The sequence spans 183 residues: dCTP deaminase, dUMP-forming (183 aa).

DCTP-binding positions include 99-104 (KSSIAR), Asp117, 125-127 (TLE), Gln146, Tyr159, Lys166, and Gln170. Glu127 (proton donor/acceptor) is an active-site residue.

This sequence belongs to the dCTP deaminase family. Homotrimer.

The catalysed reaction is dCTP + 2 H2O = dUMP + NH4(+) + diphosphate. It participates in pyrimidine metabolism; dUMP biosynthesis; dUMP from dCTP: step 1/1. In terms of biological role, bifunctional enzyme that catalyzes both the deamination of dCTP to dUTP and the hydrolysis of dUTP to dUMP without releasing the toxic dUTP intermediate. This chain is dCTP deaminase, dUMP-forming, found in Methanoregula boonei (strain DSM 21154 / JCM 14090 / 6A8).